The following is a 164-amino-acid chain: Phosphopantetheine adenylyltransferase (164 aa).

Threonine 9 is a binding site for substrate. Residues 9–10 and histidine 17 each bind ATP; that span reads TF. Lysine 41, threonine 76, and arginine 90 together coordinate substrate. ATP-binding positions include 91-93, glutamate 101, and 126-132; these read GLR and YQFVSSS.

The protein belongs to the bacterial CoaD family. As to quaternary structure, homohexamer. Requires Mg(2+) as cofactor.

The protein localises to the cytoplasm. The catalysed reaction is (R)-4'-phosphopantetheine + ATP + H(+) = 3'-dephospho-CoA + diphosphate. It functions in the pathway cofactor biosynthesis; coenzyme A biosynthesis; CoA from (R)-pantothenate: step 4/5. Its function is as follows. Reversibly transfers an adenylyl group from ATP to 4'-phosphopantetheine, yielding dephospho-CoA (dPCoA) and pyrophosphate. This is Phosphopantetheine adenylyltransferase from Coprothermobacter proteolyticus (strain ATCC 35245 / DSM 5265 / OCM 4 / BT).